The following is a 30-amino-acid chain: Cliotide T20 (30 aa).

A cross-link (cyclopeptide (Gly-Asn)) is located at residues 1–30 (GSAIRCGESCLLGKCYTPGCTCDRPICKKN). Intrachain disulfides connect C6/C20, C10/C22, and C15/C27.

Contains 3 disulfide bonds. Post-translationally, this is a cyclic peptide. Expressed in root nodules but not in seed.

In terms of biological role, probably participates in a plant defense mechanism. Active against Gram-negative bacterium E.coli ATCC 700926 (MIC=0.5 uM) under low-salt conditions. Not active against Gram-positive bacterium S.aureus ATCC 12600 up to a concentration of 100 uM under low-salt conditions. Exhibits immunomodulatory activity but no cytotoxicity in vitro. This chain is Cliotide T20, found in Clitoria ternatea (Butterfly pea).